The following is a 628-amino-acid chain: Very-long-chain aldehyde decarbonylase GL1-2 (628 aa).

Helical transmembrane passes span 37 to 57 (GAAP…ARGL), 131 to 151 (GWAI…YWAH), 191 to 211 (VVIG…VGLV), 299 to 319 (DFVF…PFVL), and 331 to 351 (FVLL…WCCS). A Fatty acid hydroxylase domain is found at 137-277 (LLHVLVAEPL…MPIFDLLGGT (141 aa)).

Belongs to the sterol desaturase family. As to quaternary structure, homodimer.

It localises to the endoplasmic reticulum membrane. It catalyses the reaction a long-chain fatty aldehyde + 2 NADPH + O2 + H(+) = a long-chain alkane + formate + 2 NADP(+) + H2O. Aldehyde decarbonylase involved in the conversion of aldehydes to alkanes. Core component of a very-long-chain alkane synthesis complex. This chain is Very-long-chain aldehyde decarbonylase GL1-2, found in Oryza sativa subsp. indica (Rice).